The sequence spans 362 residues: tRNA/tmRNA (uracil-C(5))-methyltransferase (362 aa).

The S-adenosyl-L-methionine site is built by glutamine 186, tyrosine 214, asparagine 219, glutamate 235, and aspartate 295. Cysteine 320 (nucleophile) is an active-site residue. Glutamate 354 acts as the Proton acceptor in catalysis.

It belongs to the class I-like SAM-binding methyltransferase superfamily. RNA M5U methyltransferase family. TrmA subfamily.

The enzyme catalyses uridine(54) in tRNA + S-adenosyl-L-methionine = 5-methyluridine(54) in tRNA + S-adenosyl-L-homocysteine + H(+). It catalyses the reaction uridine(341) in tmRNA + S-adenosyl-L-methionine = 5-methyluridine(341) in tmRNA + S-adenosyl-L-homocysteine + H(+). Its function is as follows. Dual-specificity methyltransferase that catalyzes the formation of 5-methyluridine at position 54 (m5U54) in all tRNAs, and that of position 341 (m5U341) in tmRNA (transfer-mRNA). This is tRNA/tmRNA (uracil-C(5))-methyltransferase from Dechloromonas aromatica (strain RCB).